We begin with the raw amino-acid sequence, 421 residues long: Caspase-12 (421 aa).

One can recognise a CARD domain in the interval 1 to 92 (MADKKPSKED…QLSLEYQHES (92 aa)). Ser85 is subject to Phosphoserine. Residues 88–131 (YQHESEDQESEESSASSSSSTESEEENEESKDEERAASAHSMAV) form a disordered region. A compositionally biased stretch (acidic residues) spans 109–118 (ESEEENEESK). Catalysis depends on residues His252 and Cys300.

It belongs to the peptidase C14A family. As to quaternary structure, heterotetramer that consists of two anti-parallel arranged heterodimers, each one formed by two subunits (Potential). May interact with TRAF2.

Its function is as follows. Involved in the activation cascade of caspases responsible for apoptosis execution. In Macaca mulatta (Rhesus macaque), this protein is Caspase-12.